A 238-amino-acid chain; its full sequence is Ubiquinone biosynthesis O-methyltransferase (238 aa).

S-adenosyl-L-methionine contacts are provided by Arg39, Gly58, Asp79, and Met123.

Belongs to the methyltransferase superfamily. UbiG/COQ3 family.

It catalyses the reaction a 3-demethylubiquinol + S-adenosyl-L-methionine = a ubiquinol + S-adenosyl-L-homocysteine + H(+). The catalysed reaction is a 3-(all-trans-polyprenyl)benzene-1,2-diol + S-adenosyl-L-methionine = a 2-methoxy-6-(all-trans-polyprenyl)phenol + S-adenosyl-L-homocysteine + H(+). The protein operates within cofactor biosynthesis; ubiquinone biosynthesis. Its function is as follows. O-methyltransferase that catalyzes the 2 O-methylation steps in the ubiquinone biosynthetic pathway. In Hahella chejuensis (strain KCTC 2396), this protein is Ubiquinone biosynthesis O-methyltransferase.